A 178-amino-acid polypeptide reads, in one-letter code: Imidazoleglycerol-phosphate dehydratase (178 aa).

It belongs to the imidazoleglycerol-phosphate dehydratase family.

Its subcellular location is the cytoplasm. The catalysed reaction is D-erythro-1-(imidazol-4-yl)glycerol 3-phosphate = 3-(imidazol-4-yl)-2-oxopropyl phosphate + H2O. It participates in amino-acid biosynthesis; L-histidine biosynthesis; L-histidine from 5-phospho-alpha-D-ribose 1-diphosphate: step 6/9. The chain is Imidazoleglycerol-phosphate dehydratase from Archaeoglobus fulgidus (strain ATCC 49558 / DSM 4304 / JCM 9628 / NBRC 100126 / VC-16).